A 366-amino-acid polypeptide reads, in one-letter code: Beta sliding clamp (366 aa).

The protein belongs to the beta sliding clamp family. As to quaternary structure, forms a ring-shaped head-to-tail homodimer around DNA which binds and tethers DNA polymerases and other proteins to the DNA. The DNA replisome complex has a single clamp-loading complex (3 tau and 1 each of delta, delta', psi and chi subunits) which binds 3 Pol III cores (1 core on the leading strand and 2 on the lagging strand) each with a beta sliding clamp dimer. Additional proteins in the replisome are other copies of gamma, psi and chi, Ssb, DNA helicase and RNA primase.

It localises to the cytoplasm. Its function is as follows. Confers DNA tethering and processivity to DNA polymerases and other proteins. Acts as a clamp, forming a ring around DNA (a reaction catalyzed by the clamp-loading complex) which diffuses in an ATP-independent manner freely and bidirectionally along dsDNA. Initially characterized for its ability to contact the catalytic subunit of DNA polymerase III (Pol III), a complex, multichain enzyme responsible for most of the replicative synthesis in bacteria; Pol III exhibits 3'-5' exonuclease proofreading activity. The beta chain is required for initiation of replication as well as for processivity of DNA replication. This chain is Beta sliding clamp (dnaN), found in Chlamydia pneumoniae (Chlamydophila pneumoniae).